The primary structure comprises 158 residues: Lipoprotein signal peptidase (158 aa).

A run of 4 helical transmembrane segments spans residues 7–27 (LFWIAAFIAFFLDQITKYWVV), 38–58 (LLTGIFHFTYVTNTGAAFSLL), 68–88 (LSLGVSLVLIALALFGPTLNL), and 92–112 (LGYGLILGGAMGNGIDRFVLG). Active-site residues include Asp-116 and Asp-132. Residues 125 to 145 (FPVFNVADSFISIGIVFLLIA) traverse the membrane as a helical segment.

It belongs to the peptidase A8 family.

It is found in the cell inner membrane. The catalysed reaction is Release of signal peptides from bacterial membrane prolipoproteins. Hydrolyzes -Xaa-Yaa-Zaa-|-(S,diacylglyceryl)Cys-, in which Xaa is hydrophobic (preferably Leu), and Yaa (Ala or Ser) and Zaa (Gly or Ala) have small, neutral side chains.. The protein operates within protein modification; lipoprotein biosynthesis (signal peptide cleavage). In terms of biological role, this protein specifically catalyzes the removal of signal peptides from prolipoproteins. This Nostoc punctiforme (strain ATCC 29133 / PCC 73102) protein is Lipoprotein signal peptidase.